Here is a 151-residue protein sequence, read N- to C-terminus: MLKSVNILNKRARFDYEIIDTYTAGIVLAGTEIKSIRLGKANITESFCEFSGIELFAINTYIEEYSFGNQFNHKSRSERKLLLNKKELKSLHKSVQAKGLTIVPLKLFTNEKGLAKLQIGLCKGKKNYDKRESLKEQDTKRDLDRIKKAYN.

Belongs to the SmpB family.

It localises to the cytoplasm. Required for rescue of stalled ribosomes mediated by trans-translation. Binds to transfer-messenger RNA (tmRNA), required for stable association of tmRNA with ribosomes. tmRNA and SmpB together mimic tRNA shape, replacing the anticodon stem-loop with SmpB. tmRNA is encoded by the ssrA gene; the 2 termini fold to resemble tRNA(Ala) and it encodes a 'tag peptide', a short internal open reading frame. During trans-translation Ala-aminoacylated tmRNA acts like a tRNA, entering the A-site of stalled ribosomes, displacing the stalled mRNA. The ribosome then switches to translate the ORF on the tmRNA; the nascent peptide is terminated with the 'tag peptide' encoded by the tmRNA and targeted for degradation. The ribosome is freed to recommence translation, which seems to be the essential function of trans-translation. This is SsrA-binding protein from Flavobacterium johnsoniae (strain ATCC 17061 / DSM 2064 / JCM 8514 / BCRC 14874 / CCUG 350202 / NBRC 14942 / NCIMB 11054 / UW101) (Cytophaga johnsonae).